The primary structure comprises 186 residues: Ribosome-recycling factor (186 aa).

Belongs to the RRF family.

Its subcellular location is the cytoplasm. In terms of biological role, responsible for the release of ribosomes from messenger RNA at the termination of protein biosynthesis. May increase the efficiency of translation by recycling ribosomes from one round of translation to another. The protein is Ribosome-recycling factor of Rickettsia akari (strain Hartford).